A 407-amino-acid chain; its full sequence is Protein phosphatase methylesterase 1 (407 aa).

The segment at 1–53 (MSDLQKSFAKSKLAKLPPEPPPIPESVADEDDDSGSSTETVTPSPVKQLFARP) is disordered. Catalysis depends on residues S185, D211, and H342. Residues 388 to 401 (GAGVPLGKAEGGTT) show a composition bias toward gly residues. The tract at residues 388–407 (GAGVPLGKAEGGTTGSFKRS) is disordered.

The protein belongs to the AB hydrolase superfamily.

The enzyme catalyses [phosphatase 2A protein]-C-terminal L-leucine methyl ester + H2O = [phosphatase 2A protein]-C-terminal L-leucine + methanol + H(+). Functionally, demethylates proteins that have been reversibly carboxymethylated. Demethylates the phosphatase PP2A catalytic subunit. This Emericella nidulans (strain FGSC A4 / ATCC 38163 / CBS 112.46 / NRRL 194 / M139) (Aspergillus nidulans) protein is Protein phosphatase methylesterase 1 (ppe1).